The chain runs to 877 residues: Alanine--tRNA ligase (877 aa).

The Zn(2+) site is built by histidine 556, histidine 560, cysteine 657, and histidine 661.

Belongs to the class-II aminoacyl-tRNA synthetase family. Zn(2+) serves as cofactor.

It localises to the cytoplasm. The enzyme catalyses tRNA(Ala) + L-alanine + ATP = L-alanyl-tRNA(Ala) + AMP + diphosphate. Its function is as follows. Catalyzes the attachment of alanine to tRNA(Ala) in a two-step reaction: alanine is first activated by ATP to form Ala-AMP and then transferred to the acceptor end of tRNA(Ala). Also edits incorrectly charged Ser-tRNA(Ala) and Gly-tRNA(Ala) via its editing domain. The chain is Alanine--tRNA ligase from Wolbachia pipientis wMel.